A 150-amino-acid polypeptide reads, in one-letter code: Photosystem II extrinsic protein V (150 aa).

Positions 1–20 (MIRVIMLLVLVWMTPMISWA) are cleaved as a signal peptide. 4 residues coordinate heme c: Cys50, Cys53, His54, and His105.

Belongs to the cytochrome c family. PsbV subfamily. As to quaternary structure, PSII is composed of 1 copy each of membrane proteins PsbA, PsbB, PsbC, PsbD, PsbE, PsbF, PsbH, PsbI, PsbJ, PsbK, PsbL, PsbM, PsbT, PsbY, PsbZ, Psb30/Ycf12, at least 3 peripheral proteins of the oxygen-evolving complex and a large number of cofactors. It forms dimeric complexes. The extrinsic subunits in red algae are PsbO (OEC33), PsbQ', cytochrome c-550 and PsbU. It depends on heme c as a cofactor.

It is found in the plastid. The protein localises to the chloroplast thylakoid membrane. Functionally, one of the extrinsic, lumenal subunits of photosystem II (PSII). PSII is a light-driven water plastoquinone oxidoreductase, using light energy to abstract electrons from H(2)O, generating a proton gradient subsequently used for ATP formation. The extrinsic proteins stabilize the structure of photosystem II oxygen-evolving complex (OEC), the ion environment of oxygen evolution and protect the OEC against heat-induced inactivation. This chain is Photosystem II extrinsic protein V, found in Cyanidioschyzon merolae (strain NIES-3377 / 10D) (Unicellular red alga).